The primary structure comprises 462 residues: Centrosomal protein of 55 kDa (462 aa).

Over residues M1–K11 the composition is skewed to basic and acidic residues. Residues M1 to T25 form a disordered region. Over residues S12–S23 the composition is skewed to low complexity. Coiled-coil stretches lie at residues K50 to L185 and Y228 to H400. Phosphoserine is present on residues S96 and S99. Positions A157–K235 are interaction with TSG101. The tract at residues F160 to A214 is interaction with PDCD6IP. Residues Q354–K462 are required for localization to the interphase centrosome and to the midbody during cytokinesis. Phosphoserine is present on residues S423 and S426. At T428 the chain carries Phosphothreonine. The residue at position 434 (S434) is a Phosphoserine; by PLK1.

As to quaternary structure, homodimer. Interacts (phosphorylated on Ser-423 and Ser-426) with PLK1; the interaction is indirect via the MTMR3:MTMR4 heterooligomer, occurs during early mitosis, regulates the phosphorylation of CEP55 by PLK1 and its recruitment to the midbody where it can mediate cell abscission. Interacts with AKAP9/CG-NAP; the interaction occurs in interphase and is lost upon mitotic entry. Interacts with PCNT/Kendrin; the interaction occurs in interphase and is lost upon mitotic entry. Directly interacts with PDCD6IP; this interaction is required for PDCD6IP targeting to the midbody; CEP55 binds PDCD6IP in a 2:1 stoichiometry; PDCD6IP competes with TSG101 for the same binding site. Interacts with TSG101; TSG101 competes with PDCD6IP for the same binding site; interaction is required for cytokinesis. Interacts with MVB12A, VPS37B, VPS37C and VPS28. There is a hierachy of phosphorylation, where both Ser-423 and Ser-426 are phosphorylated at the onset of mitosis, prior to Ser-434. Phosphorylation at Ser-423 and Ser-426 is required for dissociation from the centrosome at the G2/M boundary. Phosphorylation at the 3 sites, Ser-423, Ser-426 and Ser-434, is required for protein function at the final stages of cell division to complete cytokinesis successfully.

Its subcellular location is the cytoplasm. The protein localises to the cytoskeleton. It is found in the microtubule organizing center. It localises to the centrosome. The protein resides in the centriole. Its subcellular location is the cleavage furrow. The protein localises to the midbody. It is found in the midbody ring. Functionally, plays a role in mitotic exit and cytokinesis. Recruits PDCD6IP and TSG101 to midbody during cytokinesis. Required for successful completion of cytokinesis. Not required for microtubule nucleation. Plays a role in the development of the brain and kidney. The sequence is that of Centrosomal protein of 55 kDa from Rattus norvegicus (Rat).